Reading from the N-terminus, the 198-residue chain is Recombination protein RecR (198 aa).

The C4-type zinc finger occupies 57–72 (CSVCGHITDQDPCYIC). The Toprim domain occupies 80-175 (SVICVVQDPK…KLSRIAHGLP (96 aa)).

This sequence belongs to the RecR family.

In terms of biological role, may play a role in DNA repair. It seems to be involved in an RecBC-independent recombinational process of DNA repair. It may act with RecF and RecO. The polypeptide is Recombination protein RecR (Bacillus subtilis (strain 168)).